The sequence spans 164 residues: NADH-quinone oxidoreductase subunit I (164 aa).

4Fe-4S ferredoxin-type domains lie at 55–84 (RRYE…IEID) and 95–124 (KVYD…MGPY). 8 residues coordinate [4Fe-4S] cluster: Cys-64, Cys-67, Cys-70, Cys-74, Cys-104, Cys-107, Cys-110, and Cys-114.

The protein belongs to the complex I 23 kDa subunit family. NDH-1 is composed of 14 different subunits. Subunits NuoA, H, J, K, L, M, N constitute the membrane sector of the complex. [4Fe-4S] cluster serves as cofactor.

The protein localises to the cell inner membrane. It catalyses the reaction a quinone + NADH + 5 H(+)(in) = a quinol + NAD(+) + 4 H(+)(out). In terms of biological role, NDH-1 shuttles electrons from NADH, via FMN and iron-sulfur (Fe-S) centers, to quinones in the respiratory chain. The immediate electron acceptor for the enzyme in this species is believed to be ubiquinone. Couples the redox reaction to proton translocation (for every two electrons transferred, four hydrogen ions are translocated across the cytoplasmic membrane), and thus conserves the redox energy in a proton gradient. The sequence is that of NADH-quinone oxidoreductase subunit I from Magnetococcus marinus (strain ATCC BAA-1437 / JCM 17883 / MC-1).